Consider the following 432-residue polypeptide: WD repeat-containing protein 18 (432 aa).

WD repeat units lie at residues 36–75, 78–116, 119–158, 170–211, 213–257, and 267–306; these read GGQA…QLQQ, MCPG…LLVI, RHYQ…QADP, HHAL…LLLS, LFDV…SFHP, and GHRN…CIRT.

This sequence belongs to the WD repeat IPI3/WDR18 family. As to quaternary structure, component of the 5FMC complex, at least composed of PELP1, LAS1L, TEX10, WDR18 and SENP3; the complex interacts with methylated CHTOP and ZNF148. Interacts with NOL9. Component of the PELP1 complex, composed of at least PELP1, TEX10 and WDR18. The complex interacts with pre-60S ribosome particles.

The protein localises to the nucleus. It is found in the nucleolus. It localises to the nucleoplasm. The protein resides in the cytoplasm. Its subcellular location is the dynein axonemal particle. Its function is as follows. Functions as a component of the Five Friends of Methylated CHTOP (5FMC) complex; the 5FMC complex is recruited to ZNF148 by methylated CHTOP, leading to desumoylation of ZNF148 and subsequent transactivation of ZNF148 target genes. Component of the PELP1 complex involved in the nucleolar steps of 28S rRNA maturation and the subsequent nucleoplasmic transit of the pre-60S ribosomal subunit. May play a role during development. The sequence is that of WD repeat-containing protein 18 (WDR18) from Homo sapiens (Human).